An 871-amino-acid polypeptide reads, in one-letter code: Dual O-methyltransferase/FAD-dependent monooxygenase CTB3 (871 aa).

Residues 1–429 (MMQFQRDLEA…GLLTVRSAGQ (429 aa)) are O-methyltransferase. An S-adenosyl-L-methionine-binding site is contributed by Asp-279. His-331 serves as the catalytic Proton acceptor. Residues 430–871 (TALSGTNTLT…NLVDCSEFVF (442 aa)) are FAD-dependent monooxygenase. FAD contacts are provided by Glu-485, Arg-569, and Ala-806.

The protein in the C-terminal section; belongs to the paxM FAD-dependent monooxygenase family. It in the N-terminal section; belongs to the class I-like SAM-binding methyltransferase superfamily. Cation-independent O-methyltransferase family. COMT subfamily.

The enzyme catalyses nor-toralactone + S-adenosyl-L-methionine = toralactone + S-adenosyl-L-homocysteine + H(+). The catalysed reaction is toralactone + NADH + O2 + H(+) = 1-(3,4,5-trihydroxy-7-methoxynaphthalen-2-yl)propan-2-one + CO2 + NAD(+). It functions in the pathway mycotoxin biosynthesis. Its function is as follows. Dual O-methyltransferase/FAD-dependent monooxygenase; part of the gene cluster that mediates the biosynthesis of cercosporin, a light-activated, non-host-selective toxin. The perylenequinone chromophore of cercosporin absorbs light energy to attain an electronically-activated triplet state and produces active oxygen species such as the hydroxyl radical, superoxide, hydrogen peroxide or singlet oxygen upon reaction with oxygen molecules. These reactive oxygen species cause damage to various cellular components including lipids, proteins and nucleic acids. The first step of cercosporin biosynthesis is performed by the polyketide synthase CTB1 which catalyzes the formation of nor-toralactone. The starter unit acyltransferase (SAT) domain of CTB1 initiates polyketide extension by the selective utilization of acetyl-CoA, which is elongated to the heptaketide in the beta-ketoacyl synthase (KS) domain by successive condensations with six malonyl units introduced by the malonyl acyltransferase (MAT) domain. The product template (PT) domain catalyzes C4-C9 and C2-C11 aldol cyclizations and dehydrations to a trihydroxynaphthalene, which is thought to be delivered to the thioesterase (TE) domain for product release. The bifunctional enzyme CTB3 then methylates nor-toralactone to toralactone before conducting an unusual oxidative aromatic ring opening. The O-methyltransferase CTB2 further methylates the nascent OH-6 of the CBT3 product, blocking further oxidation at this site before the reductase CTB6 reduces the 2-oxopropyl ketone at position C7, giving naphthalene. The FAD-dependent monooxygenase CTB5 in concert with the multicopper oxidase CTB12 are responsible for homodimerization of naphthalene with CTB7 installing the dioxepine moiety, finally producing cercosporin. The fasciclin domain-containing protein CTB11 might act with CTB5 and CTB12 whereas the roles of CTB9 and CTB10 have still to be elucidated. In Cercospora nicotianae (Barn spot disease fungus), this protein is Dual O-methyltransferase/FAD-dependent monooxygenase CTB3.